A 420-amino-acid polypeptide reads, in one-letter code: Peroxisomal biogenesis factor 3 (420 aa).

At 1–16 the chain is on the peroxisomal side; the sequence is MPIFSSLNSFLRRHKK. The chain crosses the membrane as a helical span at residues 17–37; sequence KLIVTATLTFSAYFLVNQFII. The Cytoplasmic portion of the chain corresponds to 38 to 420; the sequence is KKLKNFQNSL…FSASIYSNFE (383 aa).

Belongs to the peroxin-3 family.

Its subcellular location is the peroxisome membrane. In terms of biological role, involved in peroxisome biosynthesis. This chain is Peroxisomal biogenesis factor 3 (PEX3), found in Debaryomyces hansenii (strain ATCC 36239 / CBS 767 / BCRC 21394 / JCM 1990 / NBRC 0083 / IGC 2968) (Yeast).